Here is a 372-residue protein sequence, read N- to C-terminus: Serine protease 44 (372 aa).

A signal peptide spans 1–25; it reads MAFQGCDCFGLLVWLLLLQTRLGKA. Residues 26 to 351 are Extracellular-facing; sequence RMVPGTPSLS…KELSRASCWK (326 aa). The disordered stretch occupies residues 31-72; that stretch reads TPSLSPLPSENGLDDSGVNPQERPLTGMPETSLPRKPGDSTR. Residues 112-345 enclose the Peptidase S1 domain; that stretch reads IVGGRPAPAR…YRDWIIKELS (234 aa). C137 and C153 are oxidised to a cystine. Catalysis depends on charge relay system residues H152 and D197. N208 carries an N-linked (GlcNAc...) asparagine glycan. Disulfide bonds link C231/C303, C262/C283, and C293/C321. S297 (charge relay system) is an active-site residue. A helical membrane pass occupies residues 352–372; that stretch reads LSGFLVLSVCLVLHLAIVVAL.

The protein belongs to the peptidase S1 family. In terms of tissue distribution, testis-specific. Expressed by primary and secondary spermatocytes.

The protein resides in the membrane. Its subcellular location is the cytoplasm. Functionally, lacks protease activity in vitro. The polypeptide is Serine protease 44 (Mus musculus (Mouse)).